The chain runs to 434 residues: Angio-associated migratory cell protein (434 aa).

The tract at residues methionine 1–glutamate 63 is disordered. At serine 20 the chain carries Phosphoserine. Over residues aspartate 39–glutamate 62 the composition is skewed to acidic residues. 8 WD repeats span residues leucine 89–glutamate 129, glycine 132–serine 171, glutamate 173–glutamine 212, proline 214–lysine 254, glycine 258–arginine 299, serine 315–glutamine 354, glutamine 356–aspartate 395, and glycine 398–aspartate 433.

Expressed in metastatic melanoma, liver, skin, kidney, heart, lung, lymph node, skeletal muscle and brain, and also in A2058 melanoma cells and activated T-cells (at protein level). Expressed in blood vessels. Strongly expressed in endothelial cells, cytotrophoblasts, and poorly differentiated. colon adenocarcinoma cells found in lymphatics.

It is found in the cell membrane. The protein resides in the cytoplasm. Functionally, plays a role in angiogenesis and cell migration. In smooth muscle cell migration, may act through the RhoA pathway. In Homo sapiens (Human), this protein is Angio-associated migratory cell protein (AAMP).